We begin with the raw amino-acid sequence, 133 residues long: Ribosome-binding factor A (133 aa).

It belongs to the RbfA family. Monomer. Binds 30S ribosomal subunits, but not 50S ribosomal subunits or 70S ribosomes.

The protein resides in the cytoplasm. One of several proteins that assist in the late maturation steps of the functional core of the 30S ribosomal subunit. Associates with free 30S ribosomal subunits (but not with 30S subunits that are part of 70S ribosomes or polysomes). Required for efficient processing of 16S rRNA. May interact with the 5'-terminal helix region of 16S rRNA. The polypeptide is Ribosome-binding factor A (Acinetobacter baylyi (strain ATCC 33305 / BD413 / ADP1)).